The chain runs to 189 residues: MAKVNLEQIEHAVRLILEAIGDDPNREGVLDTPKRVAKMYAEVFSGMHEDPKEHLHKVFGEDHEELVLVKDIPFYSMCEHHLVPFYGVAHVAYIPQGGKVTGLSKLARTVDTIARRPQLQERITSTVANSIMEVLEPHGVMVVVEAEHMCMTMRGVKKPGAKTVTTAVRGVLENDAAARSEILSFIKTK.

Zn(2+) is bound by residues Cys-78, His-81, and Cys-150.

It belongs to the GTP cyclohydrolase I family. In terms of assembly, homomer.

It carries out the reaction GTP + H2O = 7,8-dihydroneopterin 3'-triphosphate + formate + H(+). The protein operates within cofactor biosynthesis; 7,8-dihydroneopterin triphosphate biosynthesis; 7,8-dihydroneopterin triphosphate from GTP: step 1/1. In Bacillus anthracis (strain A0248), this protein is GTP cyclohydrolase 1.